Reading from the N-terminus, the 365-residue chain is uncharacterized protein (365 aa).

The next 3 membrane-spanning stretches (helical) occupy residues 105–125 (TGNWFLVILFLALLWLRQCWL), 151–171 (ILTTLVTVGTTLGTPVFSLTI), and 187–207 (IFLIIFSVFSISLGLVSSLIF).

It is found in the cell membrane. This is an uncharacterized protein from Mycoplasma genitalium (strain ATCC 33530 / DSM 19775 / NCTC 10195 / G37) (Mycoplasmoides genitalium).